A 431-amino-acid polypeptide reads, in one-letter code: Adenylosuccinate synthetase (431 aa).

GTP-binding positions include 13–19 and 41–43; these read GDEGKGK and GHT. The active-site Proton acceptor is aspartate 14. Residues aspartate 14 and glycine 41 each coordinate Mg(2+). IMP is bound by residues 14–17, 39–42, threonine 130, arginine 144, glutamine 225, threonine 240, and arginine 304; these read DEGK and NAGH. Histidine 42 serves as the catalytic Proton donor. 300–306 is a binding site for substrate; the sequence is ATTGRQR. GTP is bound by residues arginine 306, 332 to 334, and 414 to 416; these read KLD and STG.

Belongs to the adenylosuccinate synthetase family. As to quaternary structure, homodimer. Requires Mg(2+) as cofactor.

It localises to the cytoplasm. It catalyses the reaction IMP + L-aspartate + GTP = N(6)-(1,2-dicarboxyethyl)-AMP + GDP + phosphate + 2 H(+). Its pathway is purine metabolism; AMP biosynthesis via de novo pathway; AMP from IMP: step 1/2. Functionally, plays an important role in the de novo pathway of purine nucleotide biosynthesis. Catalyzes the first committed step in the biosynthesis of AMP from IMP. The protein is Adenylosuccinate synthetase of Saccharophagus degradans (strain 2-40 / ATCC 43961 / DSM 17024).